Consider the following 155-residue polypeptide: MKIRSLSRFVLASTMFASFTASAVPGLWQQGYGQGNAEYSVTDASGKMFTINCTGNPDQNGIYQHSVFLILAGDKTVSSHDDSTGITVVMDHKQYAIPSTLGWRNGDNAWFSFIMDIRKARQFDVYVNDQKVGSFNPDVRNAQKVLPTLADCTND.

Residues 1-23 (MKIRSLSRFVLASTMFASFTASA) form the signal peptide.

To E.coli YkfB.

This is an uncharacterized protein from Escherichia coli (strain K12).